We begin with the raw amino-acid sequence, 290 residues long: Pyridoxal kinase PdxY (290 aa).

Residues Ser-12 and 47–48 (TQ) contribute to the substrate site. ATP is bound by residues Asp-114, Glu-151, Lys-184, and 211–214 (RPLL). Asp-225 contributes to the substrate binding site.

This sequence belongs to the pyridoxine kinase family. PdxY subfamily. As to quaternary structure, homodimer. The cofactor is Mg(2+).

The enzyme catalyses pyridoxal + ATP = pyridoxal 5'-phosphate + ADP + H(+). The protein operates within cofactor metabolism; pyridoxal 5'-phosphate salvage; pyridoxal 5'-phosphate from pyridoxal: step 1/1. Its function is as follows. Pyridoxal kinase involved in the salvage pathway of pyridoxal 5'-phosphate (PLP). Catalyzes the phosphorylation of pyridoxal to PLP. In Pseudomonas putida (strain ATCC 700007 / DSM 6899 / JCM 31910 / BCRC 17059 / LMG 24140 / F1), this protein is Pyridoxal kinase PdxY.